The chain runs to 347 residues: Phosphoribosylformylglycinamidine cyclo-ligase (347 aa).

Belongs to the AIR synthase family.

The protein localises to the cytoplasm. The catalysed reaction is 2-formamido-N(1)-(5-O-phospho-beta-D-ribosyl)acetamidine + ATP = 5-amino-1-(5-phospho-beta-D-ribosyl)imidazole + ADP + phosphate + H(+). It participates in purine metabolism; IMP biosynthesis via de novo pathway; 5-amino-1-(5-phospho-D-ribosyl)imidazole from N(2)-formyl-N(1)-(5-phospho-D-ribosyl)glycinamide: step 2/2. In Yersinia enterocolitica serotype O:8 / biotype 1B (strain NCTC 13174 / 8081), this protein is Phosphoribosylformylglycinamidine cyclo-ligase.